An 86-amino-acid chain; its full sequence is Cell division topological specificity factor (86 aa).

The protein belongs to the MinE family.

Its function is as follows. Prevents the cell division inhibition by proteins MinC and MinD at internal division sites while permitting inhibition at polar sites. This ensures cell division at the proper site by restricting the formation of a division septum at the midpoint of the long axis of the cell. This Azoarcus sp. (strain BH72) protein is Cell division topological specificity factor.